Consider the following 308-residue polypeptide: ATP synthase gamma chain (308 aa).

This sequence belongs to the ATPase gamma chain family. F-type ATPases have 2 components, CF(1) - the catalytic core - and CF(0) - the membrane proton channel. CF(1) has five subunits: alpha(3), beta(3), gamma(1), delta(1), epsilon(1). CF(0) has three main subunits: a, b and c.

Its subcellular location is the cell inner membrane. In terms of biological role, produces ATP from ADP in the presence of a proton gradient across the membrane. The gamma chain is believed to be important in regulating ATPase activity and the flow of protons through the CF(0) complex. This is ATP synthase gamma chain from Bartonella tribocorum (strain CIP 105476 / IBS 506).